The sequence spans 284 residues: Probable plastid-lipid-associated protein 10, chloroplastic (284 aa).

Residues 1 to 40 (MDRIASATFSCPAISLSRVCRISPFGLNIKTNHRKRFSCR) constitute a chloroplast transit peptide.

Belongs to the PAP/fibrillin family.

It is found in the plastid. The protein resides in the chloroplast. The protein localises to the plastoglobule. The polypeptide is Probable plastid-lipid-associated protein 10, chloroplastic (PAP10) (Arabidopsis thaliana (Mouse-ear cress)).